Here is an 80-residue protein sequence, read N- to C-terminus: MTQKTPGEIRAEAEAALKPLGQQRINVLAELDEIEKDVRPLIAEAVRMEVPYRRINEVTAVAPNTARAWAKAEAEKGSGS.

DNA-binding regions (H-T-H motif) lie at residues 13-32 (AEAALKPLGQQRINVLAELD) and 56-75 (NEVTAVAPNTARAWAKAEAE).

In terms of biological role, repressor for the transcription of certain pIJ101 promoters, including those the from kilA and kilB loci. This is Protein KorB (korB) from Streptomyces lividans.